Here is a 211-residue protein sequence, read N- to C-terminus: Large ribosomal subunit protein uL3 (211 aa).

This sequence belongs to the universal ribosomal protein uL3 family. Part of the 50S ribosomal subunit. Forms a cluster with proteins L14 and L19.

Functionally, one of the primary rRNA binding proteins, it binds directly near the 3'-end of the 23S rRNA, where it nucleates assembly of the 50S subunit. The chain is Large ribosomal subunit protein uL3 from Halothermothrix orenii (strain H 168 / OCM 544 / DSM 9562).